A 505-amino-acid polypeptide reads, in one-letter code: DEAD-box ATP-dependent RNA helicase 41 (505 aa).

An HIT-type zinc finger spans residues 27–56 (GEPKCVICSRYGEYICDETNDDVCSLECKQ). The short motif at 110 to 138 (LTFTSCGLPPKLLLNLETAGYDFPTPIQM) is the Q motif element. The region spanning 141–318 (IPAALTGKSL…GSLAKEIILV (178 aa)) is the Helicase ATP-binding domain. 154–161 (ADTGSGKT) is an ATP binding site. The DEAD box signature appears at 267–270 (DEVD). The region spanning 342 to 492 (KKQKLFDILR…AIPKELINLT (151 aa)) is the Helicase C-terminal domain.

The protein belongs to the DEAD box helicase family. DDX59 subfamily.

The enzyme catalyses ATP + H2O = ADP + phosphate + H(+). This Arabidopsis thaliana (Mouse-ear cress) protein is DEAD-box ATP-dependent RNA helicase 41 (RH41).